Here is a 117-residue protein sequence, read N- to C-terminus: Large ribosomal subunit protein uL22 (117 aa).

The protein belongs to the universal ribosomal protein uL22 family. In terms of assembly, part of the 50S ribosomal subunit.

Functionally, this protein binds specifically to 23S rRNA; its binding is stimulated by other ribosomal proteins, e.g. L4, L17, and L20. It is important during the early stages of 50S assembly. It makes multiple contacts with different domains of the 23S rRNA in the assembled 50S subunit and ribosome. In terms of biological role, the globular domain of the protein is located near the polypeptide exit tunnel on the outside of the subunit, while an extended beta-hairpin is found that lines the wall of the exit tunnel in the center of the 70S ribosome. The protein is Large ribosomal subunit protein uL22 of Latilactobacillus sakei subsp. sakei (strain 23K) (Lactobacillus sakei subsp. sakei).